Consider the following 387-residue polypeptide: 3-ketoacyl-CoA thiolase (387 aa).

Residue C91 is the Acyl-thioester intermediate of the active site. Residues H343 and C373 each act as proton acceptor in the active site.

It belongs to the thiolase-like superfamily. Thiolase family. In terms of assembly, heterotetramer of two alpha chains (FadB) and two beta chains (FadA).

The protein resides in the cytoplasm. The catalysed reaction is an acyl-CoA + acetyl-CoA = a 3-oxoacyl-CoA + CoA. Its pathway is lipid metabolism; fatty acid beta-oxidation. Functionally, catalyzes the final step of fatty acid oxidation in which acetyl-CoA is released and the CoA ester of a fatty acid two carbons shorter is formed. This is 3-ketoacyl-CoA thiolase from Escherichia coli O139:H28 (strain E24377A / ETEC).